A 1071-amino-acid chain; its full sequence is DNA-directed RNA polymerase subunit beta (1071 aa).

It belongs to the RNA polymerase beta chain family. In plastids the minimal PEP RNA polymerase catalytic core is composed of four subunits: alpha, beta, beta', and beta''. When a (nuclear-encoded) sigma factor is associated with the core the holoenzyme is formed, which can initiate transcription.

The protein resides in the plastid. The protein localises to the chloroplast. The enzyme catalyses RNA(n) + a ribonucleoside 5'-triphosphate = RNA(n+1) + diphosphate. Its function is as follows. DNA-dependent RNA polymerase catalyzes the transcription of DNA into RNA using the four ribonucleoside triphosphates as substrates. The protein is DNA-directed RNA polymerase subunit beta of Adiantum capillus-veneris (Maidenhair fern).